Reading from the N-terminus, the 351-residue chain is 1-acylglycerol-3-phosphate O-acyltransferase ABHD5 (351 aa).

Positions 79–184 (PLVLLHGFGG…LILVEPWGFP (106 aa)) constitute an AB hydrolase-1 domain. The residue at position 124 (S124) is a Phosphoserine. An HXXXXD motif motif is present at residues 329-334 (HYVYAD).

It belongs to the peptidase S33 family. ABHD4/ABHD5 subfamily. In terms of assembly, interacts with ADRP and PLIN. Interacts with PNPLA2. Interacts with PLIN5; promotes interaction with PNPLA2.

The protein resides in the cytoplasm. Its subcellular location is the lipid droplet. It carries out the reaction a 1-acyl-sn-glycero-3-phosphate + an acyl-CoA = a 1,2-diacyl-sn-glycero-3-phosphate + CoA. It catalyses the reaction 1-(9Z-octadecenoyl)-sn-glycero-3-phosphate + (9Z)-octadecenoyl-CoA = 1,2-di-(9Z-octadecenoyl)-sn-glycero-3-phosphate + CoA. The catalysed reaction is 1-(9Z-octadecenoyl)-sn-glycero-3-phosphate + hexadecanoyl-CoA = 1-(9Z)-octadecenoyl-2-hexadecanoyl-sn-glycero-3-phosphate + CoA. The enzyme catalyses 1-(9Z-octadecenoyl)-sn-glycero-3-phosphate + octadecanoyl-CoA = 1-(9Z-octadecenoyl)-2-octadecanoyl-sn-glycero-3-phosphate + CoA. It carries out the reaction 1-(9Z-octadecenoyl)-sn-glycero-3-phosphate + (5Z,8Z,11Z,14Z)-eicosatetraenoyl-CoA = 1-(9Z)-octadecenoyl-2-(5Z,8Z,11Z,14Z)-eicosatetraenoyl-sn-glycero-3-phosphate + CoA. It catalyses the reaction eicosanoyl-CoA + 1-(9Z-octadecenoyl)-sn-glycero-3-phosphate = 1-(9Z)-octadecenoyl-2-eicosanoyl-sn-glycero-3-phosphate + CoA. The catalysed reaction is 1-hexadecanoyl-sn-glycero-3-phosphate + (9Z)-octadecenoyl-CoA = 1-hexadecanoyl-2-(9Z-octadecenoyl)-sn-glycero-3-phosphate + CoA. The enzyme catalyses 1-octadecanoyl-sn-glycero-3-phosphate + (9Z)-octadecenoyl-CoA = 1-octadecanoyl-2-(9Z-octadecenoyl)-sn-glycero-3-phosphate + CoA. It carries out the reaction 1-(5Z,8Z,11Z,14Z-eicosatetraenoyl)-sn-glycero-3-phosphate + (9Z)-octadecenoyl-CoA = 1-(5Z,8Z,11Z,14Z)-eicosatetraenoyl-2-(9Z)-octadecenoyl-sn-glycero-3-phosphate + CoA. With respect to regulation, acyltransferase activity is inhibited by detergents such as Triton X-100 and 3-[(3-cholamidopropyl)dimethylammonio]-1-propanesulfonate (CHAPS). Acyltransferase activity is inhibited by the presence of magnesium and calcium. Its function is as follows. Coenzyme A-dependent lysophosphatidic acid acyltransferase that catalyzes the transfer of an acyl group on a lysophosphatidic acid. Functions preferentially with 1-oleoyl-lysophosphatidic acid followed by 1-palmitoyl-lysophosphatidic acid, 1-stearoyl-lysophosphatidic acid and 1-arachidonoyl-lysophosphatidic acid as lipid acceptor. Functions preferentially with arachidonoyl-CoA followed by oleoyl-CoA as acyl group donors. Functions in phosphatidic acid biosynthesis. May regulate the cellular storage of triacylglycerol through activation of the phospholipase PNPLA2. Involved in keratinocyte differentiation. Regulates lipid droplet fusion. The protein is 1-acylglycerol-3-phosphate O-acyltransferase ABHD5 of Rattus norvegicus (Rat).